Consider the following 288-residue polypeptide: Energy-coupling factor transporter ATP-binding protein EcfA2 (288 aa).

The 243-residue stretch at 3-245 (IKIENLTHVY…VDTLESVGLA (243 aa)) folds into the ABC transporter domain. ATP is bound at residue 40–47 (GHTGSGKS).

It belongs to the ABC transporter superfamily. Energy-coupling factor EcfA family. Forms a stable energy-coupling factor (ECF) transporter complex composed of 2 membrane-embedded substrate-binding proteins (S component), 2 ATP-binding proteins (A component) and 2 transmembrane proteins (T component).

It is found in the cell membrane. Its function is as follows. ATP-binding (A) component of a common energy-coupling factor (ECF) ABC-transporter complex. Unlike classic ABC transporters this ECF transporter provides the energy necessary to transport a number of different substrates. The chain is Energy-coupling factor transporter ATP-binding protein EcfA2 from Clostridium tetani (strain Massachusetts / E88).